A 142-amino-acid polypeptide reads, in one-letter code: Hemoglobin subunit zeta (142 aa).

An N-acetylserine modification is found at Ser2. The 141-residue stretch at Ser2–Arg142 folds into the Globin domain. Thr29 bears the Phosphothreonine mark. Ser53 bears the Phosphoserine mark. His59 serves as a coordination point for heme b. 2 positions are modified to phosphoserine: Ser73 and Ser82. His88 lines the heme b pocket.

The protein belongs to the globin family. Heterotetramer of two zeta chains and beta-type chains.

In terms of biological role, the zeta chain is an alpha-type chain of mammalian embryonic hemoglobin. This Capra hircus (Goat) protein is Hemoglobin subunit zeta (HBZ1).